The primary structure comprises 155 residues: D-aminoacyl-tRNA deacylase (155 aa).

A Gly-cisPro motif, important for rejection of L-amino acids motif is present at residues 137-138; sequence GP.

Belongs to the DTD family. Homodimer.

It localises to the cytoplasm. The enzyme catalyses glycyl-tRNA(Ala) + H2O = tRNA(Ala) + glycine + H(+). It carries out the reaction a D-aminoacyl-tRNA + H2O = a tRNA + a D-alpha-amino acid + H(+). An aminoacyl-tRNA editing enzyme that deacylates mischarged D-aminoacyl-tRNAs. Also deacylates mischarged glycyl-tRNA(Ala), protecting cells against glycine mischarging by AlaRS. Acts via tRNA-based rather than protein-based catalysis; rejects L-amino acids rather than detecting D-amino acids in the active site. By recycling D-aminoacyl-tRNA to D-amino acids and free tRNA molecules, this enzyme counteracts the toxicity associated with the formation of D-aminoacyl-tRNA entities in vivo and helps enforce protein L-homochirality. This is D-aminoacyl-tRNA deacylase from Roseiflexus sp. (strain RS-1).